The primary structure comprises 501 residues: GDP-fucose protein O-fucosyltransferase 4 (501 aa).

The Cytoplasmic segment spans residues 1-10 (MLLQMAGRGK). A helical; Signal-anchor for type II membrane protein membrane pass occupies residues 11-31 (MVPCVCLGLLGVLCWVWVSFA). At 32-501 (SFPDEQLSLG…MAVRRARGKN (470 aa)) the chain is on the lumenal side. A glycan (N-linked (GlcNAc...) asparagine) is linked at Asn173. A disulfide bond links Cys396 and Cys399. N-linked (GlcNAc...) asparagine glycans are attached at residues Asn428 and Asn478.

Belongs to the glycosyltransferase 10 family.

Its subcellular location is the endoplasmic reticulum membrane. It carries out the reaction L-threonyl-[protein] + GDP-beta-L-fucose = 3-O-(alpha-L-fucosyl)-L-threonyl-[protein] + GDP + H(+). The enzyme catalyses L-seryl-[protein] + GDP-beta-L-fucose = 3-O-(alpha-L-fucosyl)-L-seryl-[protein] + GDP + H(+). The protein operates within protein modification; protein glycosylation. Its function is as follows. Protein O-fucosyltransferase that specifically catalyzes O-fucosylation of serine or threonine residues in EMI domains of target proteins. Attaches fucose through an O-glycosidic linkage. O-fucosylation of EMI domain-containing proteins may be required for facilitating protein folding and secretion. The sequence is that of GDP-fucose protein O-fucosyltransferase 4 (fut11) from Takifugu rubripes (Japanese pufferfish).